A 51-amino-acid polypeptide reads, in one-letter code: Large ribosomal subunit protein bL33 (51 aa).

The protein belongs to the bacterial ribosomal protein bL33 family.

The chain is Large ribosomal subunit protein bL33 from Nitrosococcus oceani (strain ATCC 19707 / BCRC 17464 / JCM 30415 / NCIMB 11848 / C-107).